A 221-amino-acid chain; its full sequence is UPF0502 protein XOO0224 (221 aa).

This sequence belongs to the UPF0502 family.

The sequence is that of UPF0502 protein XOO0224 from Xanthomonas oryzae pv. oryzae (strain MAFF 311018).